Reading from the N-terminus, the 383-residue chain is MKLLILTLFLATIVLAQALTVPLNFHQASRESRRRVPQKWSNRLSALNAGTTIPISDFEDAQYYGAITIGTPGQAFKVVFDTGSSNLWIPSKKCPITVVACDLHNKYNSGASSTYVANGTDFTIQYGSGAMSGFVSQDSVTVGSLTVKDQLFAEATAEPGIAFDFAKFDGILGLAFQSISVNSIPPVFYNMLSQGLVSSTLFSFWLSRTPGANGGELSFGSIDNTKYTGDITYVPLTNETYWEFVMDDFAIDGQSAGFCGTTCHAICDSGTSLIAGPMADITALNEKLGAVILNGEGVFSDCSVINTLPNVTITVAGREFVLTPKEYVLEVTEFGKTECLSGFMGIELNMGNFWILGDVFISAYYTVFDFGNKQVGFATAIQG.

Residues 1–18 form the signal peptide; that stretch reads MKLLILTLFLATIVLAQA. A propeptide spanning residues 19–48 is cleaved from the precursor; it reads LTVPLNFHQASRESRRRVPQKWSNRLSALN. The Peptidase A1 domain maps to 63–378; sequence YYGAITIGTP…DFGNKQVGFA (316 aa). Asp-81 is an active-site residue. A disulfide bridge links Cys-94 with Cys-101. Residues Asn-118 and Asn-238 are each glycosylated (N-linked (GlcNAc...) asparagine). The cysteines at positions 259 and 263 are disulfide-linked. Asp-268 is an active-site residue. The cysteines at positions 302 and 339 are disulfide-linked. The N-linked (GlcNAc...) asparagine glycan is linked to Asn-310.

It belongs to the peptidase A1 family. In terms of assembly, monomer. In terms of processing, N-glycosylated on 2 out of the 3 potential sites. Glycans contain sulfated Mannose.

Its subcellular location is the lysosome. It is found in the secreted. It carries out the reaction Specificity similar to, but narrower than, that of pepsin A. Does not cleave the 4-Gln-|-His-5 bond in B chain of insulin.. Functionally, protease that may act during cell growth and/or development. The polypeptide is Cathepsin D (ctsD) (Dictyostelium discoideum (Social amoeba)).